The chain runs to 564 residues: Major facilitator superfamily transporter MPN_076 (564 aa).

A run of 12 helical transmembrane segments spans residues 1 to 21 (MLWA…FVID), 65 to 85 (ITLL…KFGY), 89 to 109 (VMIM…GDPL), 176 to 196 (IAGY…GTTL), 220 to 240 (NLWG…FQSV), 249 to 269 (VFIL…FAWF), 306 to 326 (MIGM…GGWW), 358 to 378 (AGLP…YMVF), 404 to 424 (IVIV…FAFV), 425 to 445 (AIAT…ILIL), 457 to 477 (VSVL…AFDI), and 501 to 521 (GAIA…AIVV).

It belongs to the major facilitator superfamily.

It is found in the cell membrane. In Mycoplasma pneumoniae (strain ATCC 29342 / M129 / Subtype 1) (Mycoplasmoides pneumoniae), this protein is Major facilitator superfamily transporter MPN_076.